We begin with the raw amino-acid sequence, 197 residues long: Suppressor of RNA silencing p3 (197 aa).

Belongs to the tenuiviruses p3 protein family. In terms of assembly, homodimer.

It is found in the host cytoplasm. In terms of biological role, acts as a suppressor of RNA-mediated gene silencing, also known as post-transcriptional gene silencing (PTGS), presumably through the binding of dsRNA. The chain is Suppressor of RNA silencing p3 from Rottboellia (Sorghum).